The chain runs to 105 residues: ATP-dependent Clp protease adapter protein ClpS (105 aa).

It belongs to the ClpS family. In terms of assembly, binds to the N-terminal domain of the chaperone ClpA.

Functionally, involved in the modulation of the specificity of the ClpAP-mediated ATP-dependent protein degradation. This is ATP-dependent Clp protease adapter protein ClpS from Streptomyces avermitilis (strain ATCC 31267 / DSM 46492 / JCM 5070 / NBRC 14893 / NCIMB 12804 / NRRL 8165 / MA-4680).